The chain runs to 311 residues: Porphobilinogen deaminase (311 aa).

Position 242 is an S-(dipyrrolylmethanemethyl)cysteine (C242).

This sequence belongs to the HMBS family. In terms of assembly, monomer. Dipyrromethane serves as cofactor.

The catalysed reaction is 4 porphobilinogen + H2O = hydroxymethylbilane + 4 NH4(+). The protein operates within porphyrin-containing compound metabolism; protoporphyrin-IX biosynthesis; coproporphyrinogen-III from 5-aminolevulinate: step 2/4. Its function is as follows. Tetrapolymerization of the monopyrrole PBG into the hydroxymethylbilane pre-uroporphyrinogen in several discrete steps. In Neisseria meningitidis serogroup A / serotype 4A (strain DSM 15465 / Z2491), this protein is Porphobilinogen deaminase (hemC).